A 445-amino-acid polypeptide reads, in one-letter code: Glycine--tRNA ligase (445 aa).

Substrate contacts are provided by Arg-97 and Glu-145. ATP-binding positions include 177 to 179, 187 to 192, 262 to 263, and 308 to 311; these read RNE, FRTCEF, EI, and GLTR. 192–196 contacts substrate; it reads FEQME. 304-308 contributes to the substrate binding site; it reads ETSAG.

Belongs to the class-II aminoacyl-tRNA synthetase family. Homodimer.

It localises to the cytoplasm. It carries out the reaction tRNA(Gly) + glycine + ATP = glycyl-tRNA(Gly) + AMP + diphosphate. Functionally, catalyzes the attachment of glycine to tRNA(Gly). The sequence is that of Glycine--tRNA ligase from Borreliella afzelii (strain PKo) (Borrelia afzelii).